Reading from the N-terminus, the 112-residue chain is uncharacterized protein (112 aa).

This is an uncharacterized protein from Archaeoglobus fulgidus (strain ATCC 49558 / DSM 4304 / JCM 9628 / NBRC 100126 / VC-16).